A 198-amino-acid polypeptide reads, in one-letter code: MORN repeat-containing protein 4 homolog (198 aa).

The residue at position 2 (alanine 2) is an N-acetylalanine. Over residues 23–45 (QHQQHPHQQGQHGHHQQGQGQSQ) the composition is skewed to low complexity. Positions 23 to 46 (QHQQHPHQQGQHGHHQQGQGQSQY) are disordered. MORN repeat units lie at residues 64–87 (YIGEWNQRGQKHGIGHLQFADGTR), 88–109 (YDGQFQEGLSQGVGCLWFADGA), 111–132 (YEGEFHQGWFHGNGIFWRADGM), and 134–153 (YEGEFRGGKIWGLGLLTFQD).

In terms of assembly, interacts with ninaC. Phosphorylated under dark conditions and is dephosphorylated by light exposure. As to expression, retina. Expressed primarily in the phototransducing compartment of photoreceptor cells, the rhabdomeres and its expression is dependent on ninaC protein (at protein level).

The protein resides in the membrane. It localises to the cell projection. The protein localises to the rhabdomere membrane. Its function is as follows. Plays a role in promoting axonal degeneration following neuronal injury by toxic insult or trauma. Organizes rhabdomeric components to suppress random activation of the phototransduction cascade and thus increases the signaling fidelity of dark-adapted photoreceptors. The rtp/ninaC complex is required for stability of inad and inac and the normal termination of phototransduction in the retina. This Drosophila melanogaster (Fruit fly) protein is MORN repeat-containing protein 4 homolog.